We begin with the raw amino-acid sequence, 221 residues long: Large ribosomal subunit protein bL25 (221 aa).

Residues 192–221 form a disordered region; that stretch reads APRVEKEETEEDTVAPGDVPAENSKDADEE.

Belongs to the bacterial ribosomal protein bL25 family. CTC subfamily. As to quaternary structure, part of the 50S ribosomal subunit; part of the 5S rRNA/L5/L18/L25 subcomplex. Contacts the 5S rRNA. Binds to the 5S rRNA independently of L5 and L18.

This is one of the proteins that binds to the 5S RNA in the ribosome where it forms part of the central protuberance. This Idiomarina loihiensis (strain ATCC BAA-735 / DSM 15497 / L2-TR) protein is Large ribosomal subunit protein bL25.